The following is a 191-amino-acid chain: Divergent paired-related homeobox (191 aa).

Residues 1–15 (MPGSEDLRKGKDQMH) show a composition bias toward basic and acidic residues. The tract at residues 1-20 (MPGSEDLRKGKDQMHSHRKR) is disordered. Positions 16 to 75 (SHRKRTMFTKKQLEDLNILFNENPYPNPSLQKEMASKIDIHPTVLQVWFKNHRAKLKKAK) form a DNA-binding region, homeobox.

It belongs to the paired homeobox family.

It localises to the nucleus. Functionally, transcription factor that acts as a repressor. This chain is Divergent paired-related homeobox, found in Homo sapiens (Human).